The primary structure comprises 447 residues: Maintenance of mitochondrial morphology protein 1 (447 aa).

Over 1–109 the chain is Lumenal; the sequence is MKSPNETSFT…VFSAWSFAQG (109 aa). Residues 110 to 130 form a helical membrane-spanning segment; sequence LVIGQLSVIVVLIFFIKFFIF. The Cytoplasmic segment spans residues 131-447; sequence SEGPIKTEGP…DDISMKSTDL (317 aa). One can recognise an SMP-LTD domain in the interval 208–421; the sequence is SPETLDWFNV…EPRFQFIKLP (214 aa).

This sequence belongs to the MMM1 family. As to quaternary structure, homodimer. Component of the ER-mitochondria encounter structure (ERMES) or MDM complex, composed of MMM1, MDM10, MDM12 and MDM34. An MMM1 homodimer associates with one molecule of MDM12 on each side in a pairwise head-to-tail manner, and the SMP-LTD domains of MMM1 and MDM12 generate a continuous hydrophobic tunnel for phospholipid trafficking.

The protein localises to the endoplasmic reticulum membrane. Component of the ERMES/MDM complex, which serves as a molecular tether to connect the endoplasmic reticulum (ER) and mitochondria. Components of this complex are involved in the control of mitochondrial shape and protein biogenesis, and function in nonvesicular lipid trafficking between the ER and mitochondria. The MDM12-MMM1 subcomplex functions in the major beta-barrel assembly pathway that is responsible for biogenesis of all outer membrane beta-barrel proteins, and acts in a late step after the SAM complex. The MDM10-MDM12-MMM1 subcomplex further acts in the TOM40-specific pathway after the action of the MDM12-MMM1 complex. Essential for establishing and maintaining the structure of mitochondria and maintenance of mtDNA nucleoids. This chain is Maintenance of mitochondrial morphology protein 1, found in Lachancea thermotolerans (strain ATCC 56472 / CBS 6340 / NRRL Y-8284) (Yeast).